The chain runs to 500 residues: Enolase (500 aa).

Substrate contacts are provided by His-225 and Glu-234. Glu-277 serves as the catalytic Proton donor. 3 residues coordinate Mg(2+): Asp-312, Glu-361, and Asp-386. Glu-361 and Asp-386 together coordinate substrate. Lys-411 (proton acceptor) is an active-site residue. Residues Ser-438–Ser-441 and Lys-462 each bind substrate.

It belongs to the enolase family. Homodimer. The cofactor is Mg(2+).

It localises to the cytoplasm. The catalysed reaction is (2R)-2-phosphoglycerate = phosphoenolpyruvate + H2O. The protein operates within carbohydrate degradation; glycolysis; pyruvate from D-glyceraldehyde 3-phosphate: step 4/5. Its function is as follows. Enzyme of the glycolytic pathway. Glycolysis is essential in glial cells but not in neurons; neurons rely on the citric acid cycle for their energy needs, and on lactate and alanine secreted into the hemolymph by glial cells to fuel it. This is Enolase from Drosophila melanogaster (Fruit fly).